Reading from the N-terminus, the 270-residue chain is Fructose-2,6-bisphosphatase TIGAR (270 aa).

H11 (tele-phosphohistidine intermediate) is an active-site residue. N6-acetyllysine is present on K50. Catalysis depends on E89, which acts as the Proton donor/acceptor.

This sequence belongs to the phosphoglycerate mutase family. Interacts with HK2; the interaction increases hexokinase HK2 activity in a hypoxia- and HIF1A-dependent manner, resulting in the regulation of mitochondrial membrane potential, thus increasing NADPH production and decreasing intracellular ROS levels.

It is found in the cytoplasm. Its subcellular location is the nucleus. The protein resides in the mitochondrion. The catalysed reaction is beta-D-fructose 2,6-bisphosphate + H2O = beta-D-fructose 6-phosphate + phosphate. Its function is as follows. Fructose-bisphosphatase hydrolyzing fructose-2,6-bisphosphate as well as fructose-1,6-bisphosphate. Acts as a negative regulator of glycolysis by lowering intracellular levels of fructose-2,6-bisphosphate in a p53/TP53-dependent manner, resulting in the pentose phosphate pathway (PPP) activation and NADPH production. Contributes to the generation of reduced glutathione to cause a decrease in intracellular reactive oxygen species (ROS) content, correlating with its ability to protect cells from oxidative or metabolic stress-induced cell death. Plays a role in promoting protection against cell death during hypoxia by decreasing mitochondria ROS levels in a HK2-dependent manner through a mechanism that is independent of its fructose-bisphosphatase activity. In response to cardiac damage stress, mediates p53-induced inhibition of myocyte mitophagy through ROS levels reduction and the subsequent inactivation of BNIP3. Reduced mitophagy results in an enhanced apoptotic myocyte cell death, and exacerbates cardiac damage. Plays a role in adult intestinal regeneration; contributes to the growth, proliferation and survival of intestinal crypts following tissue ablation. Plays a neuroprotective role against ischemic brain damage by enhancing PPP flux and preserving mitochondria functions. Protects glioma cells from hypoxia- and ROS-induced cell death by inhibiting glycolysis and activating mitochondrial energy metabolism and oxygen consumption in a TKTL1-dependent and p53/TP53-independent manner. Plays a role in cancer cell survival by promoting DNA repair through activating PPP flux in a CDK5-ATM-dependent signaling pathway during hypoxia and/or genome stress-induced DNA damage responses. Involved in intestinal tumor progression. The chain is Fructose-2,6-bisphosphatase TIGAR from Bos taurus (Bovine).